The following is a 142-amino-acid chain: MAKKVQAYVKLQVAAGMANPSPPVGPALGQQGVNIMEFCKAFNARTESLEKGLPIPVVITVYADRSFTFVTKTPPAAVLLKKAAGIKSGSSKPNKDKVGKVTLDQIRQIAETKAADMTGATIETKMKSIEGTARSMGLVVEG.

Belongs to the universal ribosomal protein uL11 family. Part of the ribosomal stalk of the 50S ribosomal subunit. Interacts with L10 and the large rRNA to form the base of the stalk. L10 forms an elongated spine to which L12 dimers bind in a sequential fashion forming a multimeric L10(L12)X complex. In terms of processing, one or more lysine residues are methylated.

Forms part of the ribosomal stalk which helps the ribosome interact with GTP-bound translation factors. This Histophilus somni (strain 129Pt) (Haemophilus somnus) protein is Large ribosomal subunit protein uL11.